The chain runs to 176 residues: Translation initiation factor IF-3 (176 aa).

The protein belongs to the IF-3 family. Monomer.

The protein resides in the cytoplasm. In terms of biological role, IF-3 binds to the 30S ribosomal subunit and shifts the equilibrium between 70S ribosomes and their 50S and 30S subunits in favor of the free subunits, thus enhancing the availability of 30S subunits on which protein synthesis initiation begins. This Rippkaea orientalis (strain PCC 8801 / RF-1) (Cyanothece sp. (strain PCC 8801)) protein is Translation initiation factor IF-3.